The following is a 434-amino-acid chain: D-amino acid dehydrogenase (434 aa).

3-17 (VIVLGSGVIGTTTAY) provides a ligand contact to FAD.

This sequence belongs to the DadA oxidoreductase family. FAD serves as cofactor.

It catalyses the reaction a D-alpha-amino acid + A + H2O = a 2-oxocarboxylate + AH2 + NH4(+). Oxidative deamination of D-amino acids. The polypeptide is D-amino acid dehydrogenase (Bordetella parapertussis (strain 12822 / ATCC BAA-587 / NCTC 13253)).